Consider the following 138-residue polypeptide: Large ribosomal subunit protein eL27 (138 aa).

This sequence belongs to the eukaryotic ribosomal protein eL27 family.

In Solanum tuberosum (Potato), this protein is Large ribosomal subunit protein eL27 (RPL27).